A 437-amino-acid polypeptide reads, in one-letter code: Glutamyl-tRNA reductase (437 aa).

Substrate is bound by residues 49 to 52 (TCNR), Ser-109, 114 to 116 (ETQ), and Gln-120. Cys-50 serves as the catalytic Nucleophile. 189–194 (GAGKMS) is a binding site for NADP(+).

This sequence belongs to the glutamyl-tRNA reductase family. As to quaternary structure, homodimer.

The enzyme catalyses (S)-4-amino-5-oxopentanoate + tRNA(Glu) + NADP(+) = L-glutamyl-tRNA(Glu) + NADPH + H(+). The protein operates within porphyrin-containing compound metabolism; protoporphyrin-IX biosynthesis; 5-aminolevulinate from L-glutamyl-tRNA(Glu): step 1/2. Catalyzes the NADPH-dependent reduction of glutamyl-tRNA(Glu) to glutamate 1-semialdehyde (GSA). The polypeptide is Glutamyl-tRNA reductase (Paenibacillus macerans (Bacillus macerans)).